The primary structure comprises 143 residues: Large ribosomal subunit protein uL13 (143 aa).

This sequence belongs to the universal ribosomal protein uL13 family. As to quaternary structure, part of the 50S ribosomal subunit.

Its function is as follows. This protein is one of the early assembly proteins of the 50S ribosomal subunit, although it is not seen to bind rRNA by itself. It is important during the early stages of 50S assembly. The protein is Large ribosomal subunit protein uL13 of Chloroflexus aggregans (strain MD-66 / DSM 9485).